A 447-amino-acid chain; its full sequence is F-box only protein 5 (447 aa).

2 positions are modified to phosphoserine: Ser-94 and Ser-102. Residues 135–244 (ALETSRLYED…IGRKMGLECV (110 aa)) form an interaction with EVI5 region. Residues 250-296 (LFRRGLRHVLATILAQLSDMDLINVSKVSTTWKKILEDDKGAFQLYS) enclose the F-box domain. A sufficient for interaction with RPS6KA2; Prevents association of CDC20 with RPS6KA2 region spans residues 261–339 (TILAQLSDMD…KSAAQTSLKK (79 aa)). Residues 261–409 (TILAQLSDMD…GCGFDYCTKC (149 aa)) form a requires for efficient binding to CDC20 region. The inhibits APC ubiquitin ligase activity stretch occupies residues 305–447 (NNNKFSPHAS…KKSKKNLRRL (143 aa)). The segment at 322–325 (RTPL) is competitively blocks access of APC substrates to the D-box coreceptor formed by FZR1 and ANAPC10. A disordered region spans residues 337 to 358 (LKKDAQTKLSNQGDQKGSTYSR). The segment covering 343–357 (TKLSNQGDQKGSTYS) has biased composition (polar residues). The segment at 374–422 (SLKACIRCNSPAKYDCYLQRATCKREGCGFDYCTKCLCNYHTTKDCSDG) adopts a ZBR-type zinc-finger fold. 8 residues coordinate Zn(2+): Cys-378, Cys-381, Cys-396, Cys-401, Cys-406, Cys-409, His-414, and Cys-419. The interval 378–420 (CIRCNSPAKYDCYLQRATCKREGCGFDYCTKCLCNYHTTKDCS) is allows a rapid multiple mono-ubiquitination of the APC substrate, but strongly inhibits the slow ubiquitin chain elongation catalyzed by UBCH10. A sufficient to suppress UBE2S activity; essential for interaction with UBE2S; competitively inhibits the rapide ubiquitin chain elongation by UBE2D1 which blocks UBE2D1 with APC; indispensable for recruitment and position of FBXO5 to the catalytic site of APC; abrogates the inhibition of ubiquitin chain assembly primarily catalyzed by UBE2S; inhibits the ubiquitination by either UBE2C or UBE2D1 region spans residues 437 to 447 (TKKSKKNLRRL).

Part of a SCF (SKP1-cullin-F-box) protein ligase complex. Interacts with BTRC; mediates proteolysis by the SCF ubiquitin ligase complex leading to activation of APC in late mitosis and subsequent mitotic progression. Interacts with FZR1/CDH1 and the N-terminal substrate-binding domain of CDC20; prevents APC activation. Also interacts with EVI5 which blocks its phosphorylation by PLK1 and prevents its subsequent binding to BTRC and degradation. Interacts simultaneously with anaphase promoting complex (APC), through at least ANAPC2, CDC23, CDC27, the APC substrate GMNN and the APC activator FZR1. Interacts with UBE2S; interferes with the activity of UBE2S mainly by disrupting the dynamic electrostatic association between the C-terminal tail of UBE2S and ANAPC2. Interacts with RPS6KA2; cooperates to induce the metaphase arrest of early blastomeres; increases and stabilizes interaction of FBXO5 with CDC20. Post-translationally, phosphorylation by CDK2 and subsequently by PLK1 triggers degradation during early mitosis through ubiquitin-mediated proteolysis by the SCF ubiquitin ligase complex containing the F-box protein BTRC. This degradation is necessary for the activation of APC in late mitosis and subsequent mitotic progression. Phosphorylated by RPS6KA2; increases and stabilizes interaction with CDC20. Ubiquitinated by the SCF(BTRC) complex following phosphorylation by PLK1. Undergoes both 'Lys-11' and 'Lys-48'-linked polyubiquitination by APC-FZR1 complex leading to degradation by proteasome during G1 phase. Degraded through the SCF(BTRC) complex; degradation occurs during oocyte maturation, between germinal vesicle breakdown (GVBD) and meiosis I, and is required for the meiosis I-meiosis II transition.

The protein resides in the nucleus. It localises to the cytoplasm. The protein localises to the cytoskeleton. It is found in the spindle. It functions in the pathway protein modification; protein ubiquitination. Functionally, regulator of APC activity during mitotic and meiotic cell cycle. During mitotic cell cycle plays a role as both substrate and inhibitor of APC-FZR1 complex. During G1 phase, plays a role as substrate of APC-FZR1 complex E3 ligase. Then switches as an inhibitor of APC-FZR1 complex during S and G2 leading to cell-cycle commitment. As APC inhibitor, prevents the degradation of APC substrates at multiple levels: by interacting with APC and blocking access of APC substrates to the D-box coreceptor, formed by FZR1 and ANAPC10; by suppressing ubiquitin ligation and chain elongation by APC by preventing the UBE2C and UBE2S activities. Plays a role in genome integrity preservation by coordinating DNA replication with mitosis through APC inhibition in interphase to stabilize CCNA2 and GMNN in order to promote mitosis and prevent rereplication and DNA damage-induced cellular senescence. During oocyte maturation, plays a role in meiosis through inactivation of APC-FZR1 complex. Inhibits APC through RPS6KA2 interaction that increases FBXO5 affiniy for CDC20 leading to the metaphase arrest of the second meiotic division before fertilization. Controls entry into the first meiotic division through inactivation of APC-FZR1 complex. Promotes migration and osteogenic differentiation of mesenchymal stem cells. The protein is F-box only protein 5 of Homo sapiens (Human).